A 185-amino-acid chain; its full sequence is Large ribosomal subunit protein bL25 (185 aa).

It belongs to the bacterial ribosomal protein bL25 family. CTC subfamily. As to quaternary structure, part of the 50S ribosomal subunit; part of the 5S rRNA/L5/L18/L25 subcomplex. Contacts the 5S rRNA. Binds to the 5S rRNA independently of L5 and L18.

In terms of biological role, this is one of the proteins that binds to the 5S RNA in the ribosome where it forms part of the central protuberance. The protein is Large ribosomal subunit protein bL25 of Chlamydia trachomatis serovar A (strain ATCC VR-571B / DSM 19440 / HAR-13).